Reading from the N-terminus, the 1848-residue chain is Chitin synthase E (1848 aa).

Over residues 1–17 (MAAPSPAGGAPSHAQSS) the composition is skewed to low complexity. Positions 1–22 (MAAPSPAGGAPSHAQSSLPSLP) are disordered. Positions 1–779 (MAAPSPAGGA…CWADLAKVGE (779 aa)) constitute a Myosin motor domain. Residue 102 to 109 (GESGSGKT) participates in ATP binding. Residues 593 to 621 (SSKPLRMPSMARRKTSPSSRLAFDAGDAD) are disordered. Positions 659–683 (LDIVNKCLSSTNLNPYFIFCLKPND) are actin-binding. The next 2 helical transmembrane spans lie at 889-909 (WIAL…KLFG) and 928-948 (LIIW…PGLV). The 89-residue stretch at 952 to 1040 (QHVYSAAELS…LLDYRPTNIS (89 aa)) folds into the Cytochrome b5 heme-binding domain. Asn1038 and Asn1063 each carry an N-linked (GlcNAc...) asparagine glycan. The helical transmembrane segment at 1200–1220 (FILAISVLICSIIVFKFLAAL) threads the bilayer. Residues Asn1423, Asn1457, and Asn1563 are each glycosylated (N-linked (GlcNAc...) asparagine). A run of 3 helical transmembrane segments spans residues 1595 to 1615 (LSTV…YWLV), 1621 to 1641 (IPYT…LIFI), and 1648 to 1668 (MVGW…ALPL). N-linked (GlcNAc...) asparagine glycosylation is present at Asn1786. Residues 1790-1845 (LPSDDAILAEIREILRTADLMSVTKKSIKLELERRFGVNLDLKRPYINSATEAVLA) form the DEK-C domain.

The protein in the N-terminal section; belongs to the TRAFAC class myosin-kinesin ATPase superfamily. Myosin family. In the C-terminal section; belongs to the chitin synthase family. Class V subfamily.

The protein resides in the cell membrane. It is found in the cell septum. It localises to the cell tip. The catalysed reaction is [(1-&gt;4)-N-acetyl-beta-D-glucosaminyl](n) + UDP-N-acetyl-alpha-D-glucosamine = [(1-&gt;4)-N-acetyl-beta-D-glucosaminyl](n+1) + UDP + H(+). In terms of biological role, polymerizes chitin, a structural polymer of the cell wall and septum, by transferring the sugar moiety of UDP-GlcNAc to the non-reducing end of the growing chitin polymer. Important for hyphal growth and conidiophore development but not pathogenicity. The chain is Chitin synthase E from Aspergillus fumigatus (strain ATCC MYA-4609 / CBS 101355 / FGSC A1100 / Af293) (Neosartorya fumigata).